The sequence spans 387 residues: 3-ketoacyl-CoA thiolase (387 aa).

Residue Cys-91 is the Acyl-thioester intermediate of the active site. Active-site proton acceptor residues include His-343 and Cys-373.

It belongs to the thiolase-like superfamily. Thiolase family. Heterotetramer of two alpha chains (FadB) and two beta chains (FadA).

The protein localises to the cytoplasm. It carries out the reaction an acyl-CoA + acetyl-CoA = a 3-oxoacyl-CoA + CoA. It functions in the pathway lipid metabolism; fatty acid beta-oxidation. Catalyzes the final step of fatty acid oxidation in which acetyl-CoA is released and the CoA ester of a fatty acid two carbons shorter is formed. The chain is 3-ketoacyl-CoA thiolase from Serratia proteamaculans (strain 568).